Consider the following 213-residue polypeptide: Thiamine-phosphate synthase (213 aa).

Residues 40–44 (QYRDK) and N72 each bind 4-amino-2-methyl-5-(diphosphooxymethyl)pyrimidine. D73 and D91 together coordinate Mg(2+). T110 provides a ligand contact to 4-amino-2-methyl-5-(diphosphooxymethyl)pyrimidine. 137 to 139 (SHT) is a 2-[(2R,5Z)-2-carboxy-4-methylthiazol-5(2H)-ylidene]ethyl phosphate binding site. K140 lines the 4-amino-2-methyl-5-(diphosphooxymethyl)pyrimidine pocket. G167 provides a ligand contact to 2-[(2R,5Z)-2-carboxy-4-methylthiazol-5(2H)-ylidene]ethyl phosphate.

It belongs to the thiamine-phosphate synthase family. It depends on Mg(2+) as a cofactor.

It catalyses the reaction 2-[(2R,5Z)-2-carboxy-4-methylthiazol-5(2H)-ylidene]ethyl phosphate + 4-amino-2-methyl-5-(diphosphooxymethyl)pyrimidine + 2 H(+) = thiamine phosphate + CO2 + diphosphate. The enzyme catalyses 2-(2-carboxy-4-methylthiazol-5-yl)ethyl phosphate + 4-amino-2-methyl-5-(diphosphooxymethyl)pyrimidine + 2 H(+) = thiamine phosphate + CO2 + diphosphate. The catalysed reaction is 4-methyl-5-(2-phosphooxyethyl)-thiazole + 4-amino-2-methyl-5-(diphosphooxymethyl)pyrimidine + H(+) = thiamine phosphate + diphosphate. Its pathway is cofactor biosynthesis; thiamine diphosphate biosynthesis; thiamine phosphate from 4-amino-2-methyl-5-diphosphomethylpyrimidine and 4-methyl-5-(2-phosphoethyl)-thiazole: step 1/1. Functionally, condenses 4-methyl-5-(beta-hydroxyethyl)thiazole monophosphate (THZ-P) and 2-methyl-4-amino-5-hydroxymethyl pyrimidine pyrophosphate (HMP-PP) to form thiamine monophosphate (TMP). This Stutzerimonas stutzeri (strain A1501) (Pseudomonas stutzeri) protein is Thiamine-phosphate synthase.